Reading from the N-terminus, the 282-residue chain is Acetyl-coenzyme A carboxylase carboxyl transferase subunit beta (282 aa).

The CoA carboxyltransferase N-terminal domain occupies 29 to 282 (LWRTCPKCQR…LMKYGGKQND (254 aa)). Zn(2+) is bound by residues Cys33, Cys36, Cys51, and Cys54. A C4-type zinc finger spans residues 33–54 (CPKCQRTLFAAQMDEYATCPGC).

This sequence belongs to the AccD/PCCB family. Acetyl-CoA carboxylase is a heterohexamer composed of biotin carboxyl carrier protein (AccB), biotin carboxylase (AccC) and two subunits each of ACCase subunit alpha (AccA) and ACCase subunit beta (AccD). It depends on Zn(2+) as a cofactor.

The protein resides in the cytoplasm. The enzyme catalyses N(6)-carboxybiotinyl-L-lysyl-[protein] + acetyl-CoA = N(6)-biotinyl-L-lysyl-[protein] + malonyl-CoA. It participates in lipid metabolism; malonyl-CoA biosynthesis; malonyl-CoA from acetyl-CoA: step 1/1. Component of the acetyl coenzyme A carboxylase (ACC) complex. Biotin carboxylase (BC) catalyzes the carboxylation of biotin on its carrier protein (BCCP) and then the CO(2) group is transferred by the transcarboxylase to acetyl-CoA to form malonyl-CoA. This is Acetyl-coenzyme A carboxylase carboxyl transferase subunit beta from Limosilactobacillus fermentum (strain NBRC 3956 / LMG 18251) (Lactobacillus fermentum).